A 424-amino-acid chain; its full sequence is Calreticulin-3 (424 aa).

The N-terminal stretch at 1-28 (MGLPQNKLSFFCFFFLVSVLTLAPLAFS) is a signal peptide. Asn-97 carries N-linked (GlcNAc...) asparagine glycosylation. Cys-114 and Cys-146 form a disulfide bridge. 4 residues coordinate an alpha-D-glucoside: Tyr-118, Lys-120, Tyr-137, and Asp-144. 7 consecutive repeat copies span residues 200-211 (REFGSMYTDWDI), 219-230 (VKNAKKPEDWDD), 236-247 (DPNDVKPEGFDS), 254-265 (DRKAKEPEDWDE), 269-279 (GLWEPPKIPNS), 283-293 (GPWKAKRIKNP), and 297-307 (GKWKNPWIDNP). Positions 200-265 (REFGSMYTDW…KAKEPEDWDE (66 aa)) are 4 X approximate repeats. Acidic residues predominate over residues 228-237 (WDDREYIDDP). Positions 228-275 (WDDREYIDDPNDVKPEGFDSIPREIPDRKAKEPEDWDEEENGLWEPPK) are disordered. Positions 238-260 (NDVKPEGFDSIPREIPDRKAKEP) are enriched in basic and acidic residues. A 3 X approximate repeats region spans residues 269-307 (GLWEPPKIPNSAYKGPWKAKRIKNPNYKGKWKNPWIDNP). Glu-327 contacts an alpha-D-glucoside. Residues 368 to 401 (FAEAEKERKAREDEEARIAREEGERRRKERDHRY) are compositionally biased toward basic and acidic residues. The interval 368–424 (FAEAEKERKAREDEEARIAREEGERRRKERDHRYGDRRRRYKRPNPRDYMDDYHDEL) is disordered. The segment covering 402 to 411 (GDRRRRYKRP) has biased composition (basic residues). Basic and acidic residues predominate over residues 412 to 424 (NPRDYMDDYHDEL). A Prevents secretion from ER motif is present at residues 421–424 (HDEL).

Belongs to the calreticulin family.

The protein resides in the endoplasmic reticulum lumen. Functionally, molecular calcium-binding chaperone promoting folding, oligomeric assembly and quality control in the ER via the calreticulin/calnexin cycle. This lectin may interact transiently with almost all of the monoglucosylated glycoproteins that are synthesized in the ER. Required for elongation factor Tu receptor (EFR) accumulation and for EFR, but not flagellin-sensing 2 (FLS2) signaling. The polypeptide is Calreticulin-3 (CRT3) (Arabidopsis thaliana (Mouse-ear cress)).